Reading from the N-terminus, the 304-residue chain is Ribosome-inactivating protein 9 (304 aa).

Residue Glu208 is part of the active site.

The protein belongs to the ribosome-inactivating protein family. Type 1 RIP subfamily. In terms of assembly, monomer. As to expression, accumulates to high levels in seeds.

It localises to the cytoplasm. It carries out the reaction Endohydrolysis of the N-glycosidic bond at one specific adenosine on the 28S rRNA.. In terms of biological role, possesses features of some constitutive defense agent. The coordinate Opaque-2-controlled synthesis of this protein and the major seed storage proteins (zeins) may provide the germinating seedling with both nutritional benefits and protection against pathogen invasion of the surrounding endosperm. The sequence is that of Ribosome-inactivating protein 9 (CRIP9) from Zea mays (Maize).